The following is a 442-amino-acid chain: NAD(P)H sulfur oxidoreductase (CoA-dependent) (442 aa).

13–14 (AA) lines the FAD pocket. Arg24 is a CoA binding site. FAD-binding positions include 35 to 36 (EA) and 42 to 44 (HAP). CoA is bound by residues 41-45 (SHAPC), 62-63 (HY), and Arg72. Catalysis depends on Cys45, which acts as the Redox-active. Residues Val82, Asp280, and Ala298 each contribute to the FAD site. 2 residues coordinate CoA: Asn302 and Lys358. Tyr422 contributes to the FAD binding site. 2 residues coordinate CoA: Trp430 and Arg438.

The protein belongs to the class-III pyridine nucleotide-disulfide oxidoreductase family. As to quaternary structure, homodimer. The cofactor is FAD.

Its subcellular location is the cytoplasm. It catalyses the reaction hydrogen sulfide + NADP(+) = sulfur + NADPH. It carries out the reaction hydrogen sulfide + NAD(+) = sulfur + NADH. The enzyme catalyses NADP(+) + 2 CoA = CoA-disulfide + NADPH + H(+). The catalysed reaction is NAD(+) + 2 CoA = CoA-disulfide + NADH + H(+). In terms of biological role, catalyzes the CoA-dependent reduction of elemental sulfur (S(0)) to produce hydrogen sulfide. Can use both NADPH and NADH, but shows a preference for NADPH. May enable S(0) to be used, via sulfide, for iron-sulfur cluster synthesis by SipA. Also shows coenzyme A disulfide reductase (CoADR) activity with both NADH and NADPH. However, CoADR specific activity is about 20-fold lower than the sulfur reduction assay and CoADR activity appears to be an artifactual side reaction and is not thought to have any physiological relevance. Also shows NAD(P)H oxidase activity with both NADH and NADPH. The chain is NAD(P)H sulfur oxidoreductase (CoA-dependent) from Pyrococcus furiosus (strain ATCC 43587 / DSM 3638 / JCM 8422 / Vc1).